The primary structure comprises 350 residues: Biotin synthase (350 aa).

Over residues 1 to 13 (MVTQAATRPSNDA) the composition is skewed to polar residues. The segment at 1 to 20 (MVTQAATRPSNDAGQDGVTE) is disordered. The Radical SAM core domain maps to 71-296 (PEVEVEGIIS…RTMLRFAGGR (226 aa)). [4Fe-4S] cluster is bound by residues C86, C90, and C93. [2Fe-2S] cluster is bound by residues C129, C162, C221, and R291.

This sequence belongs to the radical SAM superfamily. Biotin synthase family. As to quaternary structure, homodimer. Requires [4Fe-4S] cluster as cofactor. [2Fe-2S] cluster serves as cofactor.

It catalyses the reaction (4R,5S)-dethiobiotin + (sulfur carrier)-SH + 2 reduced [2Fe-2S]-[ferredoxin] + 2 S-adenosyl-L-methionine = (sulfur carrier)-H + biotin + 2 5'-deoxyadenosine + 2 L-methionine + 2 oxidized [2Fe-2S]-[ferredoxin]. It participates in cofactor biosynthesis; biotin biosynthesis; biotin from 7,8-diaminononanoate: step 2/2. Functionally, catalyzes the conversion of dethiobiotin (DTB) to biotin by the insertion of a sulfur atom into dethiobiotin via a radical-based mechanism. This is Biotin synthase from Mycobacterium ulcerans (strain Agy99).